A 185-amino-acid polypeptide reads, in one-letter code: Putative manganese efflux pump MntP (185 aa).

The next 6 membrane-spanning stretches (helical) occupy residues 4–24 (LLLSSLVIAVGLAMDSFSVSL), 43–63 (IFFGFFQFAMPLLGWGIGVPI), 67–87 (IDPFGYWIVVGLFFFIGGKMI), 107–127 (LLLAVATSIDALAVGISFALI), 131–151 (VLLPAVIIGVVAFLFSFFGVL), and 165–185 (QILGGVILVLIGIKFLIEYCL).

This sequence belongs to the MntP (TC 9.B.29) family.

It localises to the cell membrane. Its function is as follows. Probably functions as a manganese efflux pump. The sequence is that of Putative manganese efflux pump MntP from Methanocorpusculum labreanum (strain ATCC 43576 / DSM 4855 / Z).